The primary structure comprises 348 residues: D-alanine--D-alanine ligase (348 aa).

In terms of domain architecture, ATP-grasp spans 132 to 334 (KRVLESAGIA…YPDLIEKLVA (203 aa)). ATP is bound at residue 162–217 (EEKLSYPVFTKPSNMGSSVGISKSDNQEELRASLDLAFKYDSRVLVEQGVTAREIE). Mg(2+) contacts are provided by D288, E301, and N303.

It belongs to the D-alanine--D-alanine ligase family. Mg(2+) serves as cofactor. Requires Mn(2+) as cofactor.

The protein resides in the cytoplasm. The catalysed reaction is 2 D-alanine + ATP = D-alanyl-D-alanine + ADP + phosphate + H(+). Its pathway is cell wall biogenesis; peptidoglycan biosynthesis. Functionally, cell wall formation. This chain is D-alanine--D-alanine ligase, found in Streptococcus gordonii (strain Challis / ATCC 35105 / BCRC 15272 / CH1 / DL1 / V288).